The following is a 428-amino-acid chain: Cyclic AMP-responsive element-binding protein 3-like protein 3-A (428 aa).

At 1-286 (MENYSDQGGD…VMNGSNKPVQ (286 aa)) the chain is on the cytoplasmic side. Residues 67 to 83 (VSGSPVWSPSPSDSGIS) show a composition bias toward low complexity. A disordered region spans residues 67–104 (VSGSPVWSPSPSDSGISEDPHSDHIDSPPPNASPPMEP). The span at 93 to 103 (SPPPNASPPME) shows a compositional bias: pro residues. A bZIP domain is found at 210 to 273 (ILKKIRRKIR…ISLMEQLRRL (64 aa)). The interval 212–241 (KKIRRKIRNKQSAQESRKKKKEYIDGLESR) is basic motif. Residues 252–273 (LQRKVFQLEKCNISLMEQLRRL) are leucine-zipper. Residues 287–303 (AGTCVLVLLLSFTLILL) traverse the membrane as a helical; Signal-anchor for type II membrane protein segment. The Lumenal segment spans residues 304–428 (PNLKPFTDTK…SRRSPHADDM (125 aa)). Positions 381–428 (TEYDPESHNHSFDQHDEHHHGDPITGHVATVTLNPRRGSRRSPHADDM) are disordered. Residues 385-402 (PESHNHSFDQHDEHHHGD) are compositionally biased toward basic and acidic residues. N-linked (GlcNAc...) asparagine glycosylation occurs at N389.

Belongs to the bZIP family. ATF subfamily. As to quaternary structure, binds DNA as a dimer. Controlled by regulated intramembrane proteolysis (RIP). A fragment containing the cytoplasmic transcription factor domain is released by proteolysis. The cleavage seems to be performed sequentially by site-1 and site-2 proteases.

It localises to the endoplasmic reticulum membrane. The protein resides in the nucleus. In terms of biological role, transcriptional activator. Binds the cAMP response element (CRE). Activates transcription through box-B element and CRE. Seems to function synergistically with atf6. Regulates FGF21 transcription. The sequence is that of Cyclic AMP-responsive element-binding protein 3-like protein 3-A (creb3l3a) from Danio rerio (Zebrafish).